The sequence spans 231 residues: Transmembrane protein 225 (231 aa).

The Cytoplasmic portion of the chain corresponds to 1–13 (MVHILVRKVEATN). A helical membrane pass occupies residues 14-34 (MFFSSWTLVFLAVGIIIEEWA). The Extracellular segment spans residues 35-67 (ELKLGPQKPTITHSPWICCTPLWPSDGLEVIRN). A helical transmembrane segment spans residues 68 to 88 (ILIVVLSLSFMHNLLLGFEFT). The Cytoplasmic segment spans residues 89 to 97 (YMIPQTKYT). Residues 98–118 (LIMTACLAFLTGILLLGALLL) form a helical membrane-spanning segment. The Extracellular segment spans residues 119 to 135 (YHHMLRQGESVYYSSYK). A helical transmembrane segment spans residues 136-156 (ISWIIFTAYLNVLFLFISGFL). Residues 157–231 (SLLQYKQPID…IQARRVTWAL (75 aa)) are Cytoplasmic-facing. The RVxF motif lies at 225–229 (RRVTW).

In terms of assembly, interacts (via RVxF motif) with PPP1CC.

Its subcellular location is the cytoplasmic vesicle. It is found in the secretory vesicle. The protein localises to the acrosome membrane. In terms of biological role, probably inhibits protein phosphatase 1 (PP1) in sperm via binding to catalytic subunit PPP1CC. The sequence is that of Transmembrane protein 225 (TMEM225) from Bos taurus (Bovine).